The sequence spans 175 residues: MIDDDGYRPNVGIVICNRQGEVLWARRYGQHSWQFPQGGINPGETPEQAMYRELFEEVGLNKKDVRILASTRNWLRYKLPKRLVRWDTKPVCIGQKQRWFLLQLMCNEAEINMQRSSTPEFDGWRWVSYWYPVRQVVSFKRDVYRRVMKEFAATVMPVQEVAPPRVPPAYRRKRG.

One can recognise a Nudix hydrolase domain in the interval 6–149 (GYRPNVGIVI…KRDVYRRVMK (144 aa)). The Nudix box motif lies at 38–59 (GGINPGETPEQAMYRELFEEVG).

It belongs to the Nudix hydrolase family. RppH subfamily. A divalent metal cation serves as cofactor.

In terms of biological role, accelerates the degradation of transcripts by removing pyrophosphate from the 5'-end of triphosphorylated RNA, leading to a more labile monophosphorylated state that can stimulate subsequent ribonuclease cleavage. In Yersinia pseudotuberculosis serotype O:1b (strain IP 31758), this protein is RNA pyrophosphohydrolase.